The chain runs to 165 residues: Pyruvoyl-dependent arginine decarboxylase 1 (165 aa).

Ser-45 is modified (pyruvic acid (Ser)).

It belongs to the PdaD family. Pyruvate serves as cofactor.

It carries out the reaction L-arginine + H(+) = agmatine + CO2. The chain is Pyruvoyl-dependent arginine decarboxylase 1 (pdaD1) from Methanosarcina mazei (strain ATCC BAA-159 / DSM 3647 / Goe1 / Go1 / JCM 11833 / OCM 88) (Methanosarcina frisia).